A 157-amino-acid polypeptide reads, in one-letter code: MKCPFCGFADTRVIDSRLGKEGNNIRRRRECSQCERRFTTFERVEDMLPLIIKKDARRQPFDRKKVIGGIQRACEKRPVSIATIEKIVDTLERQLQESGEREIESKIIGQAVMDALHDLDQVAYVRFASVYRQFKDINEFMAELKDILAEGGNVRDN.

A zinc finger spans residues 3 to 34; it reads CPFCGFADTRVIDSRLGKEGNNIRRRRECSQC. The 91-residue stretch at 49 to 139 folds into the ATP-cone domain; it reads PLIIKKDARR…VYRQFKDINE (91 aa).

Belongs to the NrdR family. The cofactor is Zn(2+).

Functionally, negatively regulates transcription of bacterial ribonucleotide reductase nrd genes and operons by binding to NrdR-boxes. This Syntrophotalea carbinolica (strain DSM 2380 / NBRC 103641 / GraBd1) (Pelobacter carbinolicus) protein is Transcriptional repressor NrdR.